The chain runs to 384 residues: S-adenosylmethionine synthase (384 aa).

His-15 is an ATP binding site. Mg(2+) is bound at residue Asp-17. Glu-43 is a binding site for K(+). Residues Glu-56 and Gln-99 each contribute to the L-methionine site. A flexible loop region spans residues Gln-99–Arg-109. Residues Asp-164–Lys-166, Arg-230–Phe-231, Asp-239, Arg-245–Lys-246, Ala-262, and Lys-266 contribute to the ATP site. Asp-239 serves as a coordination point for L-methionine. An L-methionine-binding site is contributed by Lys-270.

It belongs to the AdoMet synthase family. In terms of assembly, homotetramer; dimer of dimers. It depends on Mg(2+) as a cofactor. K(+) serves as cofactor.

Its subcellular location is the cytoplasm. It catalyses the reaction L-methionine + ATP + H2O = S-adenosyl-L-methionine + phosphate + diphosphate. The protein operates within amino-acid biosynthesis; S-adenosyl-L-methionine biosynthesis; S-adenosyl-L-methionine from L-methionine: step 1/1. Catalyzes the formation of S-adenosylmethionine (AdoMet) from methionine and ATP. The overall synthetic reaction is composed of two sequential steps, AdoMet formation and the subsequent tripolyphosphate hydrolysis which occurs prior to release of AdoMet from the enzyme. The sequence is that of S-adenosylmethionine synthase from Pasteurella multocida (strain Pm70).